A 577-amino-acid chain; its full sequence is Protein downstream neighbor of son homolog (577 aa).

Disordered stretches follow at residues 1–67 (MAEL…KRRN) and 328–382 (FTQP…LEEM). Acidic residues predominate over residues 362 to 375 (ETDEVSDESDEDES).

This sequence belongs to the DONSON family. In terms of assembly, component of the replisome complex.

It is found in the nucleus. Replisome component that maintains genome stability by protecting stalled or damaged replication forks. After the induction of replication stress, required for the stabilization of stalled replication forks, the efficient activation of the intra-S-phase and G/2M cell-cycle checkpoints and the maintenance of genome stability. The protein is Protein downstream neighbor of son homolog of Xenopus tropicalis (Western clawed frog).